Reading from the N-terminus, the 441-residue chain is MRLTRYFLPILKETPKEAEIASHRLMLRAGMLRQEAAGIYAWLPLGFRVLKKIERIVREEQNRAGAIELLMPTLQLADLWRESGRYDAYGPEMLRIADRHKRELLYGPTNEEMITEIFRSYVKSYRNLPLNLYHIQWKFRDEQRPRFGVMRGREFLMKDAYSFDLDEAAARLSYNKMFVAYLRTFARMGLKAIPMRAETGPIGGDLSHEFIVLAETGESGVFCNKDVLDLPVPGEDVDYDSDLTPIIKQWTELYAATEDVHDAARYETEVPAEKRVNTRGIEVGQIFYFGTKYSDSMKALVVGPDGVEKPVHSGSYGVGVSRLVGAIIEACHDENGIKWPEAVAPFTVAILNLKQGASDTDAACEKLYRALTANGVDVLYDDTDQRPGGKFATADLIGIPWQILIGPKGLAEGKVEIKCRADGSRELMSPEDALARFGAKA.

This sequence belongs to the class-II aminoacyl-tRNA synthetase family. ProS type 2 subfamily. Homodimer.

It is found in the cytoplasm. The catalysed reaction is tRNA(Pro) + L-proline + ATP = L-prolyl-tRNA(Pro) + AMP + diphosphate. Functionally, catalyzes the attachment of proline to tRNA(Pro) in a two-step reaction: proline is first activated by ATP to form Pro-AMP and then transferred to the acceptor end of tRNA(Pro). The chain is Proline--tRNA ligase from Afipia carboxidovorans (strain ATCC 49405 / DSM 1227 / KCTC 32145 / OM5) (Oligotropha carboxidovorans).